The following is a 316-amino-acid chain: Delta(1)-pyrroline-2-carboxylate reductase (316 aa).

It belongs to the ornithine cyclodeaminase/mu-crystallin family.

It carries out the reaction L-proline + NAD(+) = 1-pyrroline-2-carboxylate + NADH + H(+). The enzyme catalyses L-proline + NADP(+) = 1-pyrroline-2-carboxylate + NADPH + H(+). In terms of biological role, catalyzes the reduction of Delta(1)-pyrroline-2-carboxylate (Pyr2C) to L-proline, using preferentially NADPH over NADH as the electron donor. Is likely involved in a degradation pathway that converts trans-3-hydroxy-L-proline (t3LHyp) to L-proline, which would allow P.denitrificans to grow on t3LHyp as a sole carbon source. This is Delta(1)-pyrroline-2-carboxylate reductase from Paracoccus denitrificans (strain Pd 1222).